The primary structure comprises 294 residues: Transcription termination/antitermination protein NusG (294 aa).

The interval 1 to 91 (MSDPNLNDAV…EEAEPAAPVD (91 aa)) is disordered. The span at 25 to 39 (DIVEAADSVDPDQAE) shows a compositional bias: acidic residues. Positions 40-53 (AADLAAGEPAERAA) are enriched in low complexity. Over residues 59-85 (DDSDEDDAAAEEAVEADDESADEEEAE) the composition is skewed to acidic residues.

This sequence belongs to the NusG family.

Participates in transcription elongation, termination and antitermination. The sequence is that of Transcription termination/antitermination protein NusG from Streptomyces griseus.